The following is a 745-amino-acid chain: Elongation factor G, mitochondrial (745 aa).

The 278-residue stretch at 40–317 folds into the tr-type G domain; the sequence is ERIRNIGISA…AVLDYLPNPG (278 aa). GTP-binding positions include 49–56, 116–120, and 170–173; these read AHIDSGKT, DTPGH, and NKLD.

The protein belongs to the TRAFAC class translation factor GTPase superfamily. Classic translation factor GTPase family. EF-G/EF-2 subfamily.

It localises to the mitochondrion. The protein operates within protein biosynthesis; polypeptide chain elongation. Its function is as follows. Mitochondrial GTPase that catalyzes the GTP-dependent ribosomal translocation step during translation elongation. During this step, the ribosome changes from the pre-translocational (PRE) to the post-translocational (POST) state as the newly formed A-site-bound peptidyl-tRNA and P-site-bound deacylated tRNA move to the P and E sites, respectively. Catalyzes the coordinated movement of the two tRNA molecules, the mRNA and conformational changes in the ribosome. Essential during development as it acts as a retrograde signal from mitochondria to the nucleus to slow down cell proliferation if mitochondrial energy output is low. This chain is Elongation factor G, mitochondrial, found in Drosophila erecta (Fruit fly).